Here is a 339-residue protein sequence, read N- to C-terminus: Ketol-acid reductoisomerase (NADP(+)) (339 aa).

The region spanning 1 to 182 (MRVYYDRDAD…GGGRAGVIET (182 aa)) is the KARI N-terminal Rossmann domain. Residues 24 to 27 (YGSQ), Arg48, Ser51, Thr53, and 83 to 86 (DELQ) contribute to the NADP(+) site. The active site involves His108. An NADP(+)-binding site is contributed by Gly134. Residues 183–328 (TFKEECETDL…KKLRSMMPWI (146 aa)) form the KARI C-terminal knotted domain. Residues Asp191, Glu195, Glu227, and Glu231 each coordinate Mg(2+). Residue Ser252 coordinates substrate.

The protein belongs to the ketol-acid reductoisomerase family. Requires Mg(2+) as cofactor.

It catalyses the reaction (2R)-2,3-dihydroxy-3-methylbutanoate + NADP(+) = (2S)-2-acetolactate + NADPH + H(+). The catalysed reaction is (2R,3R)-2,3-dihydroxy-3-methylpentanoate + NADP(+) = (S)-2-ethyl-2-hydroxy-3-oxobutanoate + NADPH + H(+). It functions in the pathway amino-acid biosynthesis; L-isoleucine biosynthesis; L-isoleucine from 2-oxobutanoate: step 2/4. The protein operates within amino-acid biosynthesis; L-valine biosynthesis; L-valine from pyruvate: step 2/4. Involved in the biosynthesis of branched-chain amino acids (BCAA). Catalyzes an alkyl-migration followed by a ketol-acid reduction of (S)-2-acetolactate (S2AL) to yield (R)-2,3-dihydroxy-isovalerate. In the isomerase reaction, S2AL is rearranged via a Mg-dependent methyl migration to produce 3-hydroxy-3-methyl-2-ketobutyrate (HMKB). In the reductase reaction, this 2-ketoacid undergoes a metal-dependent reduction by NADPH to yield (R)-2,3-dihydroxy-isovalerate. The sequence is that of Ketol-acid reductoisomerase (NADP(+)) from Bartonella tribocorum (strain CIP 105476 / IBS 506).